A 252-amino-acid chain; its full sequence is 2-succinyl-6-hydroxy-2,4-cyclohexadiene-1-carboxylate synthase (252 aa).

It belongs to the AB hydrolase superfamily. MenH family. In terms of assembly, monomer.

The enzyme catalyses 5-enolpyruvoyl-6-hydroxy-2-succinyl-cyclohex-3-ene-1-carboxylate = (1R,6R)-6-hydroxy-2-succinyl-cyclohexa-2,4-diene-1-carboxylate + pyruvate. The protein operates within quinol/quinone metabolism; 1,4-dihydroxy-2-naphthoate biosynthesis; 1,4-dihydroxy-2-naphthoate from chorismate: step 3/7. It functions in the pathway quinol/quinone metabolism; menaquinone biosynthesis. Functionally, catalyzes a proton abstraction reaction that results in 2,5-elimination of pyruvate from 2-succinyl-5-enolpyruvyl-6-hydroxy-3-cyclohexene-1-carboxylate (SEPHCHC) and the formation of 2-succinyl-6-hydroxy-2,4-cyclohexadiene-1-carboxylate (SHCHC). The polypeptide is 2-succinyl-6-hydroxy-2,4-cyclohexadiene-1-carboxylate synthase (Escherichia coli (strain UTI89 / UPEC)).